Consider the following 212-residue polypeptide: Large ribosomal subunit protein bL25 (212 aa).

The interval 190–212 is disordered; the sequence is IAEAGDALAEPEVISKGSGEADE.

It belongs to the bacterial ribosomal protein bL25 family. CTC subfamily. In terms of assembly, part of the 50S ribosomal subunit; part of the 5S rRNA/L5/L18/L25 subcomplex. Contacts the 5S rRNA. Binds to the 5S rRNA independently of L5 and L18.

Its function is as follows. This is one of the proteins that binds to the 5S RNA in the ribosome where it forms part of the central protuberance. In Rhodopirellula baltica (strain DSM 10527 / NCIMB 13988 / SH1), this protein is Large ribosomal subunit protein bL25.